Consider the following 435-residue polypeptide: Serine hydroxymethyltransferase (435 aa).

(6S)-5,6,7,8-tetrahydrofolate contacts are provided by residues L133 and 137–139 (GHL). Residue K242 is modified to N6-(pyridoxal phosphate)lysine.

The protein belongs to the SHMT family. Homodimer. Requires pyridoxal 5'-phosphate as cofactor.

The protein localises to the cytoplasm. It carries out the reaction (6R)-5,10-methylene-5,6,7,8-tetrahydrofolate + glycine + H2O = (6S)-5,6,7,8-tetrahydrofolate + L-serine. The protein operates within one-carbon metabolism; tetrahydrofolate interconversion. It functions in the pathway amino-acid biosynthesis; glycine biosynthesis; glycine from L-serine: step 1/1. Its function is as follows. Catalyzes the reversible interconversion of serine and glycine with tetrahydrofolate (THF) serving as the one-carbon carrier. This reaction serves as the major source of one-carbon groups required for the biosynthesis of purines, thymidylate, methionine, and other important biomolecules. Also exhibits THF-independent aldolase activity toward beta-hydroxyamino acids, producing glycine and aldehydes, via a retro-aldol mechanism. In Hyphomonas neptunium (strain ATCC 15444), this protein is Serine hydroxymethyltransferase.